Consider the following 255-residue polypeptide: Myogenic factor 5 (255 aa).

The bHLH domain maps to 83 to 134 (DRRKAATMRERRRLKKVNQAFETLKRCTTTNPNQRLPKVEILRNAIRYIESL). A disordered region spans residues 226 to 249 (DTASLSPATSANSQPATPGPSSSR).

Efficient DNA binding requires dimerization with another bHLH protein.

The protein localises to the nucleus. Its function is as follows. Acts as a transcriptional activator that promotes transcription of muscle-specific target genes and plays a role in muscle differentiation. Together with MYOG and MYOD1, co-occupies muscle-specific gene promoter core region during myogenesis. Induces fibroblasts to differentiate into myoblasts. Probable sequence specific DNA-binding protein. In Mus musculus (Mouse), this protein is Myogenic factor 5 (Myf5).